The primary structure comprises 152 residues: SsrA-binding protein (152 aa).

The protein belongs to the SmpB family.

The protein resides in the cytoplasm. Functionally, required for rescue of stalled ribosomes mediated by trans-translation. Binds to transfer-messenger RNA (tmRNA), required for stable association of tmRNA with ribosomes. tmRNA and SmpB together mimic tRNA shape, replacing the anticodon stem-loop with SmpB. tmRNA is encoded by the ssrA gene; the 2 termini fold to resemble tRNA(Ala) and it encodes a 'tag peptide', a short internal open reading frame. During trans-translation Ala-aminoacylated tmRNA acts like a tRNA, entering the A-site of stalled ribosomes, displacing the stalled mRNA. The ribosome then switches to translate the ORF on the tmRNA; the nascent peptide is terminated with the 'tag peptide' encoded by the tmRNA and targeted for degradation. The ribosome is freed to recommence translation, which seems to be the essential function of trans-translation. This Sulfurihydrogenibium sp. (strain YO3AOP1) protein is SsrA-binding protein.